Consider the following 171-residue polypeptide: T-cell surface glycoprotein CD3 delta chain (171 aa).

Residues 1-21 form the signal peptide; the sequence is MEHSTFLSGLVLATLLSQVSP. The Extracellular segment spans residues 22–105; the sequence is FKIPVEELED…CVELDPATLA (84 aa). Cysteines 37 and 73 form a disulfide. N-linked (GlcNAc...) asparagine glycosylation is found at Asn-38, Asn-54, and Asn-74. A helical transmembrane segment spans residues 106–126; sequence GIIVTDVIATLLLALGVFCFA. The Cytoplasmic portion of the chain corresponds to 127–171; it reads GHETGRLSGAADTQALLRNDQVYQPLRDRDDAQYSRLGGNWARNK. The ITAM domain occupies 138 to 166; it reads DTQALLRNDQVYQPLRDRDDAQYSRLGGN. A phosphotyrosine mark is found at Tyr-149 and Tyr-160.

In terms of assembly, the TCR-CD3 complex is composed of a CD3D/CD3E and a CD3G/CD3E heterodimers that preferentially associate with TCRalpha and TCRbeta, respectively, to form TCRalpha/CD3E/CD3G and TCRbeta/CD3G/CD3E trimers. In turn, the hexamer interacts with CD3Z homodimer to form the TCR-CD3 complex. Alternatively, TCRalpha and TCRbeta can be replaced by TCRgamma and TCRdelta. Interacts with coreceptors CD4 and CD8. Phosphorylated on Tyr residues after T-cell receptor triggering by LCK in association with CD4/CD8. As to expression, CD3D is mostly present on T-lymphocytes with its TCR-CD3 partners. Present also in fetal NK-cells.

It localises to the cell membrane. In terms of biological role, part of the TCR-CD3 complex present on T-lymphocyte cell surface that plays an essential role in adaptive immune response. When antigen presenting cells (APCs) activate T-cell receptor (TCR), TCR-mediated signals are transmitted across the cell membrane by the CD3 chains CD3D, CD3E, CD3G and CD3Z. All CD3 chains contain immunoreceptor tyrosine-based activation motifs (ITAMs) in their cytoplasmic domain. Upon TCR engagement, these motifs become phosphorylated by Src family protein tyrosine kinases LCK and FYN, resulting in the activation of downstream signaling pathways. In addition of this role of signal transduction in T-cell activation, CD3D plays an essential role in thymocyte differentiation. Indeed, participates in correct intracellular TCR-CD3 complex assembly and surface expression. In absence of a functional TCR-CD3 complex, thymocytes are unable to differentiate properly. Interacts with CD4 and CD8 and thus serves to establish a functional link between the TCR and coreceptors CD4 and CD8, which is needed for activation and positive selection of CD4 or CD8 T-cells. This is T-cell surface glycoprotein CD3 delta chain (CD3D) from Macaca fascicularis (Crab-eating macaque).